A 294-amino-acid polypeptide reads, in one-letter code: Type I ribosome-inactivating protein trichoanguina (294 aa).

Residues 1–19 (MALSFFFLAISLGSPTAIG) form the signal peptide. An N-linked (GlcNAc...) asparagine glycan is attached at Asn-70. Residues Glu-177 and Arg-180 contribute to the active site. N-linked (GlcNAc...) asparagine glycosylation is present at Asn-220. Positions 265–294 (VGSEYDIPTTILHPGAMGMLHNQNGNYVTM) are excised as a propeptide.

It belongs to the ribosome-inactivating protein family. Type 1 RIP subfamily.

The enzyme catalyses Endohydrolysis of the N-glycosidic bond at one specific adenosine on the 28S rRNA.. Functionally, inhibits protein synthesis by depurinating 28S rRNA in ribosomes. The polypeptide is Type I ribosome-inactivating protein trichoanguina (TCA) (Trichosanthes anguina (Snake gourd)).